A 65-amino-acid chain; its full sequence is Large ribosomal subunit protein bL35 (65 aa).

The protein belongs to the bacterial ribosomal protein bL35 family.

This Edwardsiella ictaluri (strain 93-146) protein is Large ribosomal subunit protein bL35.